The chain runs to 156 residues: Small ribosomal subunit protein uS7c (156 aa).

The protein belongs to the universal ribosomal protein uS7 family. In terms of assembly, part of the 30S ribosomal subunit.

The protein localises to the plastid. It is found in the chloroplast. Its function is as follows. One of the primary rRNA binding proteins, it binds directly to 16S rRNA where it nucleates assembly of the head domain of the 30S subunit. This is Small ribosomal subunit protein uS7c (rps7) from Thalassiosira pseudonana (Marine diatom).